Consider the following 987-residue polypeptide: Mitotic checkpoint serine/threonine-protein kinase bub-1 (987 aa).

Disordered regions lie at residues 278–385 (RRRH…TSKS) and 574–599 (LAAN…KDSS). Residues 350–364 (ERLKIMTAGRKDGNP) show a composition bias toward basic and acidic residues. The span at 368–380 (STSISSNYSTASA) shows a compositional bias: low complexity. The segment covering 575-587 (AANQAVQPSVTES) has biased composition (polar residues). The segment covering 588-599 (SKPERSDPKDSS) has biased composition (basic and acidic residues). The Protein kinase domain maps to 690-987 (LHIQTLIGQG…EACDLAANQK (298 aa)). ATP is bound by residues 696 to 704 (IGQGGYAKV) and Lys718. The active-site Proton acceptor is the Asp814.

This sequence belongs to the protein kinase superfamily. Ser/Thr protein kinase family. BUB1 subfamily. In terms of assembly, interacts (via kinase domain) with mdf-1 (via coiled coil domain); the interaction recruits mdf-1 to unattached kinetochores during mitosis and between homologous chromosomes in early anaphase of meiosis I. May interact with bub-3; for localization at the kinetochore and the onset of anaphase.

It is found in the cytoplasm. The protein resides in the cell cortex. It localises to the nucleus. Its subcellular location is the chromosome. The protein localises to the centromere. It is found in the kinetochore. It catalyses the reaction L-seryl-[protein] + ATP = O-phospho-L-seryl-[protein] + ADP + H(+). The enzyme catalyses L-threonyl-[protein] + ATP = O-phospho-L-threonyl-[protein] + ADP + H(+). Functionally, serine/threonine-protein kinase essential for spindle-assembly checkpoint signaling. Plays a key role in the recruitment of the checkpoint proteins bub-3, mdf-1 and mdf-2 to unattached kinetochores. mdf-1 recruitment is independent of bub-1 kinase activity. Has a role in the correct kinetochore localization of the spindly-like protein spdl-1. In addition, during meiotic anaphase I, controls the recruitment of hcp-1/2 and klp-19 to the ring-shaped domain formed between chromosomes. Involved in chromosome alignment, chromosome homolog segregation and spindle assembly. In association with bub-3 at the kinetochore region of chromosomes, promotes the onset on anaphase independently from spindle checkpoint signaling and promotes the formation of stable end-on bipolar attachments of chromosomes. Plays a role in nuclear envelope breakdown. Required maternally during embryogenesis and in the zygote for the postembryonic development of several tissues including ventral cord neurons, gonad, intestine and seam cells. This chain is Mitotic checkpoint serine/threonine-protein kinase bub-1, found in Caenorhabditis elegans.